The following is a 147-amino-acid chain: Thyrotropin subunit beta (147 aa).

Positions 1–20 are cleaved as a signal peptide; it reads MRVVLLASAVLCLLAGQVLS. 6 disulfide bridges follow: Cys-22–Cys-72, Cys-36–Cys-87, Cys-39–Cys-126, Cys-47–Cys-103, Cys-51–Cys-105, and Cys-108–Cys-115. N-linked (GlcNAc...) asparagine glycosylation occurs at Asn-43.

It belongs to the glycoprotein hormones subunit beta family. In terms of assembly, heterodimer of a common alpha chain and a unique beta chain which confers biological specificity to thyrotropin, lutropin, follitropin and gonadotropin.

It localises to the secreted. Indispensable for the control of thyroid structure and metabolism. May play some role in the biological processes of the immature fishes. The protein is Thyrotropin subunit beta (tshb) of Anguilla anguilla (European freshwater eel).